The sequence spans 156 residues: MIRFLGNIEVRADAKGRVFIPATFRKQLQAASEERLIMRKDVFQDCLTLYPESVWNEELNELRSRLNKWNSKHQLIFRQFVSDVEVVTPDSNGRILIPKRYLQICNIRGDIRFIGIDNKIEIWAKERAEQPFMSPEEFGAALEEIMNDENRQDGER.

SpoVT-AbrB domains lie at 7–54 and 84–127; these read NIEV…PESV and VEVV…AKER.

It belongs to the MraZ family. In terms of assembly, forms oligomers.

Its subcellular location is the cytoplasm. It is found in the nucleoid. In Bacteroides thetaiotaomicron (strain ATCC 29148 / DSM 2079 / JCM 5827 / CCUG 10774 / NCTC 10582 / VPI-5482 / E50), this protein is Transcriptional regulator MraZ.